The sequence spans 403 residues: MSTFDRIHLVVLDSVGIGAAPDANNFQNAGVPDGASDTLGHISKAVGLDVPNMAKLGLGNIPRPQALKTVAAESNPTGYATKLEEVSLGKDTMTGHWEIMGLNITEPFDTFWNGFPEEILTKIEEFSGRKVIREANKPYSGTAVIDDFGPRQMETGELIIYTSADPVLQIAAHEDIIPLEELYRICEYARSITLERPALLGRIIARPYVGEPGNFTRTSNRHDYAVSPFEDTVLNKLDQAGIDTYAVGKINDIFNGSGINHDMGHNKSNSHGIDTLIKTMGLTAFEKGFSFTNLVDFDALYGHRRDAFGYRDCLHEFDQRLPEILSAMRDNDLLLITADHGNDPTYAGTDHTREFIPLLAYSPSFKGSGVIPQGHFADISATIAENFGVERAMIGQSFLAELK.

Mn(2+)-binding residues include D13, D298, H303, D339, H340, and H351.

This sequence belongs to the phosphopentomutase family. Mn(2+) serves as cofactor.

It localises to the cytoplasm. The catalysed reaction is 2-deoxy-alpha-D-ribose 1-phosphate = 2-deoxy-D-ribose 5-phosphate. It carries out the reaction alpha-D-ribose 1-phosphate = D-ribose 5-phosphate. The protein operates within carbohydrate degradation; 2-deoxy-D-ribose 1-phosphate degradation; D-glyceraldehyde 3-phosphate and acetaldehyde from 2-deoxy-alpha-D-ribose 1-phosphate: step 1/2. In terms of biological role, isomerase that catalyzes the conversion of deoxy-ribose 1-phosphate (dRib-1-P) and ribose 1-phosphate (Rib-1-P) to deoxy-ribose 5-phosphate (dRib-5-P) and ribose 5-phosphate (Rib-5-P), respectively. The protein is Phosphopentomutase of Streptococcus uberis (strain ATCC BAA-854 / 0140J).